Here is a 283-residue protein sequence, read N- to C-terminus: ATP synthase gamma chain (283 aa).

This sequence belongs to the ATPase gamma chain family. As to quaternary structure, F-type ATPases have 2 components, CF(1) - the catalytic core - and CF(0) - the membrane proton channel. CF(1) has five subunits: alpha(3), beta(3), gamma(1), delta(1), epsilon(1). CF(0) has three main subunits: a, b and c.

The protein resides in the cell membrane. Produces ATP from ADP in the presence of a proton gradient across the membrane. The gamma chain is believed to be important in regulating ATPase activity and the flow of protons through the CF(0) complex. This is ATP synthase gamma chain from Clostridium botulinum (strain Eklund 17B / Type B).